Consider the following 179-residue polypeptide: Large ribosomal subunit protein uL5 (179 aa).

It belongs to the universal ribosomal protein uL5 family. In terms of assembly, part of the 50S ribosomal subunit; part of the 5S rRNA/L5/L18/L25 subcomplex. Contacts the 5S rRNA and the P site tRNA. Forms a bridge to the 30S subunit in the 70S ribosome.

Functionally, this is one of the proteins that bind and probably mediate the attachment of the 5S RNA into the large ribosomal subunit, where it forms part of the central protuberance. In the 70S ribosome it contacts protein S13 of the 30S subunit (bridge B1b), connecting the 2 subunits; this bridge is implicated in subunit movement. Contacts the P site tRNA; the 5S rRNA and some of its associated proteins might help stabilize positioning of ribosome-bound tRNAs. This Pseudomonas putida (strain W619) protein is Large ribosomal subunit protein uL5.